The chain runs to 139 residues: Small ribosomal subunit protein uS12 (139 aa).

A disordered region spans residues 1-21; it reads MPTINQLVRKGRKAVQEKSTA. 3-methylthioaspartic acid is present on aspartate 102.

The protein belongs to the universal ribosomal protein uS12 family. As to quaternary structure, part of the 30S ribosomal subunit. Contacts proteins S8 and S17. May interact with IF1 in the 30S initiation complex.

Functionally, with S4 and S5 plays an important role in translational accuracy. Interacts with and stabilizes bases of the 16S rRNA that are involved in tRNA selection in the A site and with the mRNA backbone. Located at the interface of the 30S and 50S subunits, it traverses the body of the 30S subunit contacting proteins on the other side and probably holding the rRNA structure together. The combined cluster of proteins S8, S12 and S17 appears to hold together the shoulder and platform of the 30S subunit. The polypeptide is Small ribosomal subunit protein uS12 (Alkaliphilus metalliredigens (strain QYMF)).